Consider the following 188-residue polypeptide: PRA1 family protein 3 (188 aa).

Met-1 bears the N-acetylmethionine mark. The Cytoplasmic portion of the chain corresponds to 1-35 (MDVNLAPLRAWDDFFPGSDRFARPDFRDISKWNNR). The next 2 membrane-spanning stretches (helical) occupy residues 36-56 (VVSNLLYYQTNYLVVAAMMIS) and 57-77 (VVGFLSPFNMILGGIIVVLVF). Over 78-92 (TGFVWAAHNKDILRR) the chain is Cytoplasmic. The next 2 helical transmembrane spans lie at 93 to 113 (MKKQYPTAFVMVVMLASYFLI) and 115 to 135 (MFGGVMVFVFGITFPLLLMFI). The required for homodimer formation and heterodimer formation with ARL6IP1 stretch occupies residues 103–117 (MVVMLASYFLISMFG). At 136–188 (HASLRLRNLKNKLENKMEGIGLKKTPMGIILDALEQQEDSINKFADYISKARE) the chain is on the cytoplasmic side. The targeting to endoplasmic reticulum membrane stretch occupies residues 136–188 (HASLRLRNLKNKLENKMEGIGLKKTPMGIILDALEQQEDSINKFADYISKARE).

This sequence belongs to the PRA1 family. Homodimer. Heterodimer with ARL6IP1. Forms multimers. Interacts with ARL6. Interacts with prenylated RAB1A and RAB3A. Interacts with SLC1A1/EAAC1. Interacts with RTN2 (via first transmembrane domain). Does not interact with VAMP1, VAMP2 or VAMP3. In terms of tissue distribution, ubiquitous. Most abundant in heart and brain. In the embryonic brain cortex, expressed in neurons and astrocytes.

Its subcellular location is the endoplasmic reticulum membrane. It localises to the cell membrane. The protein resides in the cytoplasm. The protein localises to the cytoskeleton. Its function is as follows. Regulates intracellular concentrations of taurine and glutamate. Negatively modulates SLC1A1/EAAC1 glutamate transport activity by decreasing its affinity for glutamate in a PKC activity-dependent manner. Plays a role in the retention of SLC1A1/EAAC1 in the endoplasmic reticulum. This chain is PRA1 family protein 3 (Arl6ip5), found in Rattus norvegicus (Rat).